We begin with the raw amino-acid sequence, 647 residues long: tRNA 5-methylaminomethyl-2-thiouridine biosynthesis bifunctional protein MnmC (647 aa).

Residues 1–227 form a tRNA (mnm(5)s(2)U34)-methyltransferase region; sequence MLTWKNNLTP…KREMLIGSYS (227 aa). Positions 256–647 are FAD-dependent cmnm(5)s(2)U34 oxidoreductase; sequence VGAGIAGTTL…ARFLYRKVRK (392 aa).

The protein in the N-terminal section; belongs to the methyltransferase superfamily. tRNA (mnm(5)s(2)U34)-methyltransferase family. This sequence in the C-terminal section; belongs to the DAO family. FAD is required as a cofactor.

Its subcellular location is the cytoplasm. It carries out the reaction 5-aminomethyl-2-thiouridine(34) in tRNA + S-adenosyl-L-methionine = 5-methylaminomethyl-2-thiouridine(34) in tRNA + S-adenosyl-L-homocysteine + H(+). Functionally, catalyzes the last two steps in the biosynthesis of 5-methylaminomethyl-2-thiouridine (mnm(5)s(2)U) at the wobble position (U34) in tRNA. Catalyzes the FAD-dependent demodification of cmnm(5)s(2)U34 to nm(5)s(2)U34, followed by the transfer of a methyl group from S-adenosyl-L-methionine to nm(5)s(2)U34, to form mnm(5)s(2)U34. The sequence is that of tRNA 5-methylaminomethyl-2-thiouridine biosynthesis bifunctional protein MnmC from Leptospira interrogans serogroup Icterohaemorrhagiae serovar Lai (strain 56601).